Consider the following 931-residue polypeptide: Isoleucine--tRNA ligase (931 aa).

The 'HIGH' region motif lies at 58 to 68 (PYANGHLHCGH). Glu559 is an L-isoleucyl-5'-AMP binding site. The short motif at 600 to 604 (KLSKS) is the 'KMSKS' region element. Lys603 lines the ATP pocket. Residues Cys894, Cys897, Cys914, and Cys917 each coordinate Zn(2+).

Belongs to the class-I aminoacyl-tRNA synthetase family. IleS type 1 subfamily. In terms of assembly, monomer. The cofactor is Zn(2+).

The protein localises to the cytoplasm. It carries out the reaction tRNA(Ile) + L-isoleucine + ATP = L-isoleucyl-tRNA(Ile) + AMP + diphosphate. Its function is as follows. Catalyzes the attachment of isoleucine to tRNA(Ile). As IleRS can inadvertently accommodate and process structurally similar amino acids such as valine, to avoid such errors it has two additional distinct tRNA(Ile)-dependent editing activities. One activity is designated as 'pretransfer' editing and involves the hydrolysis of activated Val-AMP. The other activity is designated 'posttransfer' editing and involves deacylation of mischarged Val-tRNA(Ile). The sequence is that of Isoleucine--tRNA ligase from Legionella pneumophila (strain Corby).